An 806-amino-acid polypeptide reads, in one-letter code: Glycerol-3-phosphate acyltransferase (806 aa).

Residues 305-310 (CHRSHM) carry the HXXXXD motif motif.

The protein belongs to the GPAT/DAPAT family.

The protein resides in the cell inner membrane. It carries out the reaction sn-glycerol 3-phosphate + an acyl-CoA = a 1-acyl-sn-glycero-3-phosphate + CoA. It participates in phospholipid metabolism; CDP-diacylglycerol biosynthesis; CDP-diacylglycerol from sn-glycerol 3-phosphate: step 1/3. The polypeptide is Glycerol-3-phosphate acyltransferase (Salmonella paratyphi A (strain ATCC 9150 / SARB42)).